A 120-amino-acid chain; its full sequence is Cell division topological specificity factor (120 aa).

Residues 93 to 120 (LNSCEGENPQQDPGAAPSEGGHLSSPSP) are disordered.

The protein belongs to the MinE family.

Prevents the cell division inhibition by proteins MinC and MinD at internal division sites while permitting inhibition at polar sites. This ensures cell division at the proper site by restricting the formation of a division septum at the midpoint of the long axis of the cell. This Synechococcus sp. (strain JA-3-3Ab) (Cyanobacteria bacterium Yellowstone A-Prime) protein is Cell division topological specificity factor.